Reading from the N-terminus, the 986-residue chain is Bone morphogenetic protein 1 (986 aa).

An N-terminal signal peptide occupies residues 1-22 (MPGVARLPLLLGLLLLPRPGRP). Positions 23-120 (LDLADYTYDL…RWRGRSRSRR (98 aa)) are excised as a propeptide. The disordered stretch occupies residues 83 to 125 (SIKAAVPGNTSTPSCQSTNGQPQRGACGRWRGRSRSRRAATSR). Residues 90 to 104 (GNTSTPSCQSTNGQP) show a composition bias toward polar residues. The N-linked (GlcNAc...) asparagine glycan is linked to asparagine 91. Residues 112-122 (WRGRSRSRRAA) are compositionally biased toward basic residues. The Peptidase M12A domain maps to 121 to 320 (AATSRPERVW…AQARKLYKCP (200 aa)). N-linked (GlcNAc...) asparagine glycosylation occurs at asparagine 142. Cystine bridges form between cysteine 163/cysteine 319, cysteine 183/cysteine 205, cysteine 185/cysteine 186, and cysteine 322/cysteine 348. Position 213 (histidine 213) interacts with Zn(2+). Residue glutamate 214 is part of the active site. 2 residues coordinate Zn(2+): histidine 217 and histidine 223. CUB domains follow at residues 322-434 (CGET…YEAI) and 435-546 (CGGD…NFFK). 2 N-linked (GlcNAc...) asparagine glycosylation sites follow: asparagine 332 and asparagine 363. 15 disulfide bridges follow: cysteine 375–cysteine 397, cysteine 435–cysteine 461, cysteine 488–cysteine 510, cysteine 551–cysteine 563, cysteine 559–cysteine 572, cysteine 574–cysteine 587, cysteine 591–cysteine 617, cysteine 644–cysteine 666, cysteine 707–cysteine 718, cysteine 714–cysteine 727, cysteine 729–cysteine 742, cysteine 747–cysteine 773, cysteine 800–cysteine 822, cysteine 860–cysteine 890, and cysteine 917–cysteine 939. In terms of domain architecture, EGF-like 1; calcium-binding spans 547–588 (EVDECSRPNRGGCEQRCLNTLGSYKCSCDPGYELAPDKRRCE). A CUB 3 domain is found at 591-703 (CGGFLTKLNG…KGFKAHFFSD (113 aa)). N-linked (GlcNAc...) asparagine glycosylation occurs at asparagine 599. The 40-residue stretch at 704 to 743 (KDECSKDNGGCQQDCVNTFGSYECQCRSGFVLHDNKHDCK) folds into the EGF-like 2; calcium-binding domain. CUB domains are found at residues 747–859 (CDHK…HATE) and 860–976 (CGGQ…YTST). Residues arginine 934 and arginine 937 each carry the omega-N-methylarginine modification.

As to quaternary structure, interacts with POSTN, the interaction promotes deposition on the extracellular matrix. It depends on Zn(2+) as a cofactor. Post-translationally, proteolytically activated in the trans-Golgi network by furin-like/paired basic proprotein convertases, cleavage is not required for secretion. In terms of tissue distribution, ubiquitous.

It localises to the golgi apparatus. The protein resides in the trans-Golgi network. Its subcellular location is the secreted. It is found in the extracellular space. The protein localises to the extracellular matrix. The catalysed reaction is Cleavage of the C-terminal propeptide at Ala-|-Asp in type I and II procollagens and at Arg-|-Asp in type III.. With respect to regulation, activity is increased by the procollagen C-endopeptidase enhancer protein. Its function is as follows. Metalloprotease that plays key roles in regulating the formation of the extracellular matrix (ECM) via processing of various precursor proteins into mature functional enzymes or structural proteins. Thereby participates in several developmental and physiological processes such as cartilage and bone formation, muscle growth and homeostasis, wound healing and tissue repair. Roles in ECM formation include cleavage of the C-terminal propeptides from procollagens such as procollagen I, II and III or the proteolytic activation of the enzyme lysyl oxidase LOX, necessary to formation of covalent cross-links in collagen and elastic fibers. Additional substrates include matricellular thrombospondin-1/THBS1 whose cleavage leads to cell adhesion disruption and TGF-beta activation. Functionally, plays an important role in bone repair by acting as a coactivator of BMP7. This is Bone morphogenetic protein 1 (BMP1) from Homo sapiens (Human).